The primary structure comprises 231 residues: Protein HHL1, chloroplastic (231 aa).

A chloroplast-targeting transit peptide spans 1–39 (MEVSMSLNALTRLPLKNTGRFEEVGLARHSLFSSRTACR). A helical membrane pass occupies residues 93 to 113 (YLWYPLSIIAGGTTAKIMVAA). The disordered stretch occupies residues 206–231 (SFGKLSSLNPGSDEKTEETSDEKAKA). Basic and acidic residues predominate over residues 217-231 (SDEKTEETSDEKAKA).

Interacts with psbB, psbC and LQY1, but not with psbA or psbD.

Its subcellular location is the plastid. The protein localises to the chloroplast thylakoid membrane. In terms of biological role, involved in photoprotection. Forms a complex with LQY1 that is involved in the repair and reassembly cycle of the PSII-LHCII supercomplex under high-light conditions. May function in guiding the release of psbC from PSII core monomers. This Arabidopsis thaliana (Mouse-ear cress) protein is Protein HHL1, chloroplastic.